Consider the following 361-residue polypeptide: MIPEGTRFLLPPEARLKAEVVGKLQHLFRRHGYEPVELPALELYDPDHPLAERAFKLVDKTGEVLALRSEFTTLLAKLLRAHLGEGAHRFQYAGPLWLREADAELGRLREYTQVGLELLGATGPLADAEVLELAFAALEALGVQGEVEVGLPSLVGEVLKASGLPEALQRRAQQAIHRKNLPELKGLLAESPVPEEARKVLLALPDLYGGREVLKEARGLPLPPKAQEALAQLERTLDLLGRPVLLDLGMARRYEYYSGIFFRAYTPGFGLPLLGGGRYDGALFPKAAGFALGVERLLEALRLPKEEEPPEVLALDLKALRRFARERRTELFHGEDPVAYARRRGIPFLARGEELFRVEEA.

This sequence belongs to the class-II aminoacyl-tRNA synthetase family. HisZ subfamily. As to quaternary structure, heteromultimer composed of HisG and HisZ subunits.

The protein resides in the cytoplasm. The protein operates within amino-acid biosynthesis; L-histidine biosynthesis; L-histidine from 5-phospho-alpha-D-ribose 1-diphosphate: step 1/9. Its function is as follows. Required for the first step of histidine biosynthesis. May allow the feedback regulation of ATP phosphoribosyltransferase activity by histidine. The chain is ATP phosphoribosyltransferase regulatory subunit from Thermus thermophilus (strain ATCC 27634 / DSM 579 / HB8).